Reading from the N-terminus, the 394-residue chain is Phosphoglycerate kinase (394 aa).

Substrate-binding positions include 21-23 (DFN), Arg-36, 59-62 (HLGR), Arg-118, and Arg-151. A Phosphoserine modification is found at Ser-183. ATP is bound by residues Lys-201 and Gly-292. At Thr-299 the chain carries Phosphothreonine. Residues Glu-323 and 350–353 (GGDS) each bind ATP.

It belongs to the phosphoglycerate kinase family. In terms of assembly, monomer.

It is found in the cytoplasm. It catalyses the reaction (2R)-3-phosphoglycerate + ATP = (2R)-3-phospho-glyceroyl phosphate + ADP. The protein operates within carbohydrate degradation; glycolysis; pyruvate from D-glyceraldehyde 3-phosphate: step 2/5. This chain is Phosphoglycerate kinase, found in Bacillus cereus (strain B4264).